The following is a 332-amino-acid chain: Formamidase (332 aa).

The region spanning 14-259 is the CN hydrolase domain; that stretch reads FLAALIQYPV…WEIVTAEVYP (246 aa). E60 serves as the catalytic Proton acceptor. K132 functions as the Proton donor in the catalytic mechanism. Catalysis depends on C165, which acts as the Nucleophile.

Belongs to the carbon-nitrogen hydrolase superfamily. Aliphatic amidase family.

The enzyme catalyses formamide + H2O = formate + NH4(+). Its function is as follows. Is an aliphatic amidase with a restricted substrate specificity, as it only hydrolyzes formamide. The polypeptide is Formamidase (Bacillus cereus (strain Q1)).